The chain runs to 105 residues: UPF0235 protein RAF_ORF1191 (105 aa).

It belongs to the UPF0235 family.

The polypeptide is UPF0235 protein RAF_ORF1191 (Rickettsia africae (strain ESF-5)).